Consider the following 785-residue polypeptide: uncharacterized protein (785 aa).

A compositionally biased stretch (polar residues) spans lysine 53 to leucine 65. A disordered region spans residues lysine 53–isoleucine 162. Over residues alanine 66–alanine 79 the composition is skewed to acidic residues. The segment covering serine 81 to glycine 94 has biased composition (polar residues). Phosphoserine is present on serine 215. 2 disordered regions span residues lysine 571 to asparagine 590 and aspartate 631 to phenylalanine 657. Over residues serine 575–glutamate 584 the composition is skewed to acidic residues. Serine 667 carries the phosphoserine modification. The interval aspartate 693 to glycine 785 is disordered. Positions arginine 725–arginine 739 are enriched in basic residues. The segment covering phenylalanine 776–glycine 785 has biased composition (low complexity).

This is an uncharacterized protein from Saccharomyces cerevisiae (strain ATCC 204508 / S288c) (Baker's yeast).